Consider the following 321-residue polypeptide: tRNA pseudouridine synthase B (321 aa).

Aspartate 47 (nucleophile) is an active-site residue.

Belongs to the pseudouridine synthase TruB family. Type 1 subfamily.

The enzyme catalyses uridine(55) in tRNA = pseudouridine(55) in tRNA. Responsible for synthesis of pseudouridine from uracil-55 in the psi GC loop of transfer RNAs. The chain is tRNA pseudouridine synthase B from Shewanella baltica (strain OS185).